Consider the following 363-residue polypeptide: p21-activated protein kinase-interacting protein 1-like (363 aa).

WD repeat units lie at residues 38–75, 78–116, 119–158, 200–238, and 241–282; these read AHTA…EHGA, HHNG…CQQT, AHKG…SAFI, NNPK…CVCE, and AHEN…VQTS. The segment at 309–363 is disordered; that stretch reads KEKSNTAVTASAVKDCDRPKKKKAQNETTDKEASETQVVHKKRKPETKQKKKKPS. Residues 322–342 show a composition bias toward basic and acidic residues; that stretch reads KDCDRPKKKKAQNETTDKEAS. Residues 347–363 show a composition bias toward basic residues; sequence VHKKRKPETKQKKKKPS.

The protein localises to the nucleus. It is found in the nucleolus. In terms of biological role, negatively regulates the PAK1 kinase. PAK1 is a member of the PAK kinase family, which has been shown to play a positive role in the regulation of signaling pathways involving MAPK8 and RELA. PAK1 exists as an inactive homodimer, which is activated by binding of small GTPases such as CDC42 to an N-terminal regulatory domain. PAK1IP1 also binds to the N-terminus of PAK1, and inhibits the specific activation of PAK1 by CDC42. May be involved in ribosomal large subunit assembly. The protein is p21-activated protein kinase-interacting protein 1-like (pak1ip1) of Xenopus laevis (African clawed frog).